The following is a 36-amino-acid chain: Photosystem I reaction center subunit VIII (36 aa).

Residues 8 to 28 (AILVPIVGLVFPALSMALFFI) traverse the membrane as a helical segment.

It belongs to the PsaI family.

Its subcellular location is the plastid. It localises to the chloroplast thylakoid membrane. Its function is as follows. May help in the organization of the PsaL subunit. This chain is Photosystem I reaction center subunit VIII, found in Phaeodactylum tricornutum (strain CCAP 1055/1).